The chain runs to 1141 residues: Isoleucine--tRNA ligase (1141 aa).

The 'HIGH' region signature appears at 50 to 60; the sequence is PSANGMPGIHH. Positions 689 to 693 match the 'KMSKS' region motif; that stretch reads KMSKR. Lys692 is a binding site for ATP.

The protein belongs to the class-I aminoacyl-tRNA synthetase family. IleS type 2 subfamily. As to quaternary structure, monomer. Zn(2+) is required as a cofactor.

Its subcellular location is the cytoplasm. The enzyme catalyses tRNA(Ile) + L-isoleucine + ATP = L-isoleucyl-tRNA(Ile) + AMP + diphosphate. Catalyzes the attachment of isoleucine to tRNA(Ile). As IleRS can inadvertently accommodate and process structurally similar amino acids such as valine, to avoid such errors it has two additional distinct tRNA(Ile)-dependent editing activities. One activity is designated as 'pretransfer' editing and involves the hydrolysis of activated Val-AMP. The other activity is designated 'posttransfer' editing and involves deacylation of mischarged Val-tRNA(Ile). This Bacteroides fragilis (strain ATCC 25285 / DSM 2151 / CCUG 4856 / JCM 11019 / LMG 10263 / NCTC 9343 / Onslow / VPI 2553 / EN-2) protein is Isoleucine--tRNA ligase.